The sequence spans 141 residues: Nucleoside diphosphate kinase (141 aa).

6 residues coordinate ATP: Lys-11, Phe-59, Arg-87, Thr-93, Arg-104, and Asn-114. The active-site Pros-phosphohistidine intermediate is the His-117.

Belongs to the NDK family. As to quaternary structure, homotetramer. Mg(2+) serves as cofactor.

The protein resides in the cytoplasm. It carries out the reaction a 2'-deoxyribonucleoside 5'-diphosphate + ATP = a 2'-deoxyribonucleoside 5'-triphosphate + ADP. The catalysed reaction is a ribonucleoside 5'-diphosphate + ATP = a ribonucleoside 5'-triphosphate + ADP. Major role in the synthesis of nucleoside triphosphates other than ATP. The ATP gamma phosphate is transferred to the NDP beta phosphate via a ping-pong mechanism, using a phosphorylated active-site intermediate. This chain is Nucleoside diphosphate kinase, found in Laribacter hongkongensis (strain HLHK9).